A 584-amino-acid polypeptide reads, in one-letter code: Galectin-3-binding protein (584 aa).

An N-terminal signal peptide occupies residues M1 to G18. Positions M24–T124 constitute an SRCR domain. 3 disulfide bridges follow: C49/C113, C62/C123, and C93/C103. N69 carries an N-linked (GlcNAc...) asparagine glycan. N-linked (GlcNAc...) asparagine glycans are attached at residues N125 and N192. A BTB domain is found at C153–L221. Residues P260–Q359 form the BACK domain. N-linked (GlcNAc...) asparagine glycans are attached at residues N361, N397, N550, and N579.

In terms of assembly, homodimers and homomultimers. The multimers form ring-like structures with a diameter of 30-40 nm. Binds LGALS1 and LGALS3. Binds ITGB1, COL4A1, COL5A1, COL6A1, FN1 and NID. Interacts with the gamma-tubulin ring complex (gamma-TuRC), composed of gamma-tubulin, TUBGCP2, TUBGCP3, TUBGCP4, TUBGCP5 and TUBGCP6. The unglycosylated form interacts with PDE4DIP; this interaction, which is PDE4DIP isoform-specific, may connect a pericentrosomal complex, made of AKAP9, CDK5RAP2, EB1/MAPRE1 and PDE4DIP, to the gamma-tubulin ring complex (gamma-TuRC) to promote microtubule assembly and acetylation.

It localises to the secreted. It is found in the extracellular space. The protein localises to the extracellular matrix. Functionally, promotes integrin-mediated cell adhesion. May stimulate host defense against viruses and tumor cells. The protein is Galectin-3-binding protein (LGALS3BP) of Pongo abelii (Sumatran orangutan).